The chain runs to 115 residues: U3-lycotoxin-Ls1k (115 aa).

The N-terminal stretch at 1 to 20 (MKFVLLFGVLLVTLFSYSSA) is a signal peptide. A propeptide spanning residues 21–44 (EMLDDFDQADEDELLSLIEKEEAR) is cleaved from the precursor. Intrachain disulfides connect C48/C63, C55/C72, C62/C87, and C74/C85.

The protein belongs to the neurotoxin 19 (CSTX) family. 01 subfamily. In terms of tissue distribution, expressed by the venom gland.

Its subcellular location is the secreted. The polypeptide is U3-lycotoxin-Ls1k (Lycosa singoriensis (Wolf spider)).